The sequence spans 101 residues: Small ribosomal subunit protein uS14 (101 aa).

The tract at residues 1 to 21 (MAKTSSVEKNNRRRKLADQYG) is disordered.

This sequence belongs to the universal ribosomal protein uS14 family. In terms of assembly, part of the 30S ribosomal subunit. Contacts proteins S3 and S10.

In terms of biological role, binds 16S rRNA, required for the assembly of 30S particles and may also be responsible for determining the conformation of the 16S rRNA at the A site. This is Small ribosomal subunit protein uS14 from Mesorhizobium japonicum (strain LMG 29417 / CECT 9101 / MAFF 303099) (Mesorhizobium loti (strain MAFF 303099)).